A 431-amino-acid chain; its full sequence is Enolase (431 aa).

Gln-167 is a (2R)-2-phosphoglycerate binding site. The active-site Proton donor is the Glu-209. The Mg(2+) site is built by Asp-246, Glu-287, and Asp-314. 4 residues coordinate (2R)-2-phosphoglycerate: Lys-339, Arg-368, Ser-369, and Lys-390. The Proton acceptor role is filled by Lys-339.

The protein belongs to the enolase family. Mg(2+) serves as cofactor.

Its subcellular location is the cytoplasm. It is found in the secreted. The protein resides in the cell surface. It catalyses the reaction (2R)-2-phosphoglycerate = phosphoenolpyruvate + H2O. Its pathway is carbohydrate degradation; glycolysis; pyruvate from D-glyceraldehyde 3-phosphate: step 4/5. Functionally, catalyzes the reversible conversion of 2-phosphoglycerate (2-PG) into phosphoenolpyruvate (PEP). It is essential for the degradation of carbohydrates via glycolysis. This Prochlorococcus marinus (strain MIT 9303) protein is Enolase.